A 301-amino-acid polypeptide reads, in one-letter code: Putative S-adenosyl-L-methionine-dependent methyltransferase MAP_3777 (301 aa).

Residues Asp-126 and 155–156 contribute to the S-adenosyl-L-methionine site; that span reads DL.

This sequence belongs to the UPF0677 family.

Functionally, exhibits S-adenosyl-L-methionine-dependent methyltransferase activity. This Mycolicibacterium paratuberculosis (strain ATCC BAA-968 / K-10) (Mycobacterium paratuberculosis) protein is Putative S-adenosyl-L-methionine-dependent methyltransferase MAP_3777.